The following is a 416-amino-acid chain: Dihydroorotase (416 aa).

Residues H53 and H55 each contribute to the Zn(2+) site. Residues 55-57 and N87 each bind substrate; that span reads HLR. Zn(2+) contacts are provided by D145, H172, H225, and D298. Residue D298 is part of the active site. Position 302 (H302) interacts with substrate.

This sequence belongs to the metallo-dependent hydrolases superfamily. DHOase family. Class I DHOase subfamily. Requires Zn(2+) as cofactor.

The catalysed reaction is (S)-dihydroorotate + H2O = N-carbamoyl-L-aspartate + H(+). It participates in pyrimidine metabolism; UMP biosynthesis via de novo pathway; (S)-dihydroorotate from bicarbonate: step 3/3. In terms of biological role, catalyzes the reversible cyclization of carbamoyl aspartate to dihydroorotate. The protein is Dihydroorotase of Deinococcus radiodurans (strain ATCC 13939 / DSM 20539 / JCM 16871 / CCUG 27074 / LMG 4051 / NBRC 15346 / NCIMB 9279 / VKM B-1422 / R1).